The primary structure comprises 91 residues: Small ribosomal subunit protein uS19 (91 aa).

Belongs to the universal ribosomal protein uS19 family.

In terms of biological role, protein S19 forms a complex with S13 that binds strongly to the 16S ribosomal RNA. This chain is Small ribosomal subunit protein uS19, found in Chromohalobacter salexigens (strain ATCC BAA-138 / DSM 3043 / CIP 106854 / NCIMB 13768 / 1H11).